A 78-amino-acid chain; its full sequence is Small ribosomal subunit protein bS18 (78 aa).

This sequence belongs to the bacterial ribosomal protein bS18 family. Part of the 30S ribosomal subunit. Forms a tight heterodimer with protein bS6.

In terms of biological role, binds as a heterodimer with protein bS6 to the central domain of the 16S rRNA, where it helps stabilize the platform of the 30S subunit. In Geobacillus kaustophilus (strain HTA426), this protein is Small ribosomal subunit protein bS18.